The chain runs to 377 residues: Mitogen-activated protein kinase pmk-1 (377 aa).

In terms of domain architecture, Protein kinase spans 35–319 (YINLTPIGTG…AKEAMEHEYL (285 aa)). ATP contacts are provided by residues 41-49 (IGTGAYGTV) and Lys-64. Asp-179 (proton acceptor) is an active-site residue. Residue Thr-191 is modified to Phosphothreonine. A TXY motif is present at residues 191–193 (TGY). Phosphotyrosine is present on Tyr-193.

Belongs to the protein kinase superfamily. CMGC Ser/Thr protein kinase family. MAP kinase subfamily. In terms of assembly, interacts with transcription factor atf-7; perhaps in a manner dependent on dual specificity protein kinase sek-1. It depends on Mg(2+) as a cofactor. Mn(2+) is required as a cofactor. Dually phosphorylated on Thr-191 and Tyr-193, probably by sek-1, which activates the enzyme. Increased phosphorylation in response to the heavy metal arsenite. Increased phosphorylation in response to intestinal colonization by probiotic Lactobacillus fermentum strain JDFM216. In terms of tissue distribution, expressed in intestinal cells.

It is found in the nucleus. It carries out the reaction L-seryl-[protein] + ATP = O-phospho-L-seryl-[protein] + ADP + H(+). It catalyses the reaction L-threonyl-[protein] + ATP = O-phospho-L-threonyl-[protein] + ADP + H(+). Activated by phosphorylation on threonine and tyrosine. Inhibited by pyridinyl-imidazole related compounds. In terms of biological role, serine/threonine kinase which responds to activation by environmental stress and pro-inflammatory cytokines by phosphorylating downstream targets. As part of a MAP kinase signaling pathway, plays a role in modulation of lifespan and immunity. Phosphorylates skn-1 which probably regulates skn-1 nuclear translocation in response to oxidative stress. Probably by activating skn-1, involved in the up-regulation of gcs-1 and glutathione-S-transferase gst-4 expression upon bacteria infection. Up-regulates expression of gcs-1 in intestinal cells upon arsenite treatment. Functions downstream of the MAPKK sek-1 and the MAPKKK nsy-1 as the MAP kinase which regulates pathogen resistance and responses to oxidative stress. Required for expression of antimicrobial peptide nlp-29 in response to fungal infection or physical injury. Involved in resistance to the nematotoxic C.cinerea galectin (Cgl2). May play a redundant role with other MAP kinases in susceptibility to anoxia, downstream of tir-1/nsy-1. Phosphorylates transcription factor rnt-1 during oxidative stress which results in rnt-1 stabilization in the intestine. Phosphorylates transcription factor atf-7 during pathogen infection resulting in modulation of target genes. Probably downstream of nsy-1 and sek-1, involved in germline apoptosis induced by heavy metals, such as Cu(2+). Regulates the basal expression of immune effector genes including irg-4, irg-5, mul-1 and drd-50. This Caenorhabditis elegans protein is Mitogen-activated protein kinase pmk-1.